The primary structure comprises 527 residues: Matrix metalloproteinase-19 (527 aa).

An N-terminal signal peptide occupies residues 1 to 18 (MDWQQLWLAFLLPMTVSG). Residues 19-98 (RALGPTEKEA…EDPFNQKSLK (80 aa)) constitute a propeptide that is removed on maturation. The Cysteine switch signature appears at 84-91 (PRCGLEDP). Residue Cys86 participates in Zn(2+) binding. Residue Asn109 is glycosylated (N-linked (GlcNAc...) asparagine). A Zn(2+)-binding site is contributed by His213. The active site involves Glu214. His217 and His223 together coordinate Zn(2+). Hemopexin repeat units follow at residues 286–333 (PNPC…WEGL), 334–372 (PGNL…FPMK), 377–425 (EPNL…FTGV), and 426–471 (PDRP…WMHC). A disulfide bond links Cys289 and Cys471. 2 N-linked (GlcNAc...) asparagine glycosylation sites follow: Asn464 and Asn479. Positions 473–500 (SQTPDTNSSTGDVTPSTTDTVLGTTPST) are disordered. A lipid anchor (GPI-anchor amidated aspartate) is attached at Asp512. The propeptide at 513–527 (SASLSFSANVTLLGA) is removed in mature form. An N-linked (GlcNAc...) asparagine glycan is attached at Asn521.

Belongs to the peptidase M10A family. It depends on Zn(2+) as a cofactor. The cofactor is Ca(2+). Post-translationally, activated by autolytic cleavage after Lys-98. In terms of processing, tyrosine phosphorylated by PKDCC/VLK. As to expression, highly expressed in the liver. Expressed in the arterial tunica media of large blood vessels.

The protein localises to the cell membrane. The protein resides in the secreted. It localises to the extracellular space. Its subcellular location is the extracellular matrix. Its function is as follows. Endopeptidase that degrades various components of the extracellular matrix, such as aggrecan and cartilage oligomeric matrix protein (comp), during development, haemostasis and pathological conditions (arthritic disease). May also play a role in neovascularization or angiogenesis. Hydrolyzes collagen type IV, laminin, nidogen, nascin-C isoform, fibronectin, and type I gelatin. This Mus musculus (Mouse) protein is Matrix metalloproteinase-19 (Mmp19).